The primary structure comprises 482 residues: Serine carboxypeptidase-like 26 (482 aa).

The N-terminal stretch at 1-28 is a signal peptide; that stretch reads MAVAAAAAARRRDVSCLLLLLCFSSSMA. Intrachain disulfides connect Cys-101-Cys-366, Cys-263-Cys-274, and Cys-298-Cys-333. N-linked (GlcNAc...) asparagine glycosylation occurs at Asn-152. Residue Ser-194 is part of the active site. N-linked (GlcNAc...) asparagine glycans are attached at residues Asn-269, Asn-301, Asn-354, and Asn-375. Residues Asp-403 and His-455 contribute to the active site.

The protein belongs to the peptidase S10 family.

It is found in the secreted. Functionally, acts as a positive regulator of grain size by controlling grain width, filling and weight. High expression of GS5 in the grain is correlated with large grain size. This is Serine carboxypeptidase-like 26 from Oryza sativa subsp. japonica (Rice).